The sequence spans 576 residues: Sulfite reductase [NADPH] hemoprotein beta-component (576 aa).

Residues Cys435, Cys441, Cys480, and Cys484 each coordinate [4Fe-4S] cluster. Siroheme is bound at residue Cys484.

It belongs to the nitrite and sulfite reductase 4Fe-4S domain family. Alpha(8)-beta(8). The alpha component is a flavoprotein, the beta component is a hemoprotein. It depends on siroheme as a cofactor. [4Fe-4S] cluster is required as a cofactor.

The enzyme catalyses hydrogen sulfide + 3 NADP(+) + 3 H2O = sulfite + 3 NADPH + 4 H(+). The protein operates within sulfur metabolism; hydrogen sulfide biosynthesis; hydrogen sulfide from sulfite (NADPH route): step 1/1. Functionally, component of the sulfite reductase complex that catalyzes the 6-electron reduction of sulfite to sulfide. This is one of several activities required for the biosynthesis of L-cysteine from sulfate. This Yersinia pestis bv. Antiqua (strain Antiqua) protein is Sulfite reductase [NADPH] hemoprotein beta-component.